Reading from the N-terminus, the 116-residue chain is MSNHKLIEAVTQSQLRTDLPSFRPGDTLKVHVRIIEGTRERIQVFEGVVIKRRGGGISETFTVRKISSGVGVERTFPLHTPKIEKIEVSRRGKVRRAKLYYLRELRGKAARIKEIR.

It belongs to the bacterial ribosomal protein bL19 family.

In terms of biological role, this protein is located at the 30S-50S ribosomal subunit interface and may play a role in the structure and function of the aminoacyl-tRNA binding site. The chain is Large ribosomal subunit protein bL19 from Staphylococcus saprophyticus subsp. saprophyticus (strain ATCC 15305 / DSM 20229 / NCIMB 8711 / NCTC 7292 / S-41).